Consider the following 116-residue polypeptide: Alpha-amylase inhibitor 5 (116 aa).

5 cysteine pairs are disulfide-bonded: Cys-4–Cys-55, Cys-18–Cys-44, Cys-27–Cys-77, Cys-45–Cys-95, and Cys-57–Cys-106.

It belongs to the protease inhibitor I6 (cereal trypsin/alpha-amylase inhibitor) family.

It is found in the secreted. Alpha-amylase inhibitor. This Sorghum bicolor (Sorghum) protein is Alpha-amylase inhibitor 5.